Consider the following 233-residue polypeptide: Large ribosomal subunit protein bL19c (233 aa).

Residues 1 to 77 constitute a chloroplast transit peptide; that stretch reads MASKVLPQAL…FPARNSFVVR (77 aa).

In terms of assembly, component of the chloroplast large ribosomal subunit (LSU). Mature 70S chloroplast ribosomes of higher plants consist of a small (30S) and a large (50S) subunit. The 30S small subunit contains 1 molecule of ribosomal RNA (16S rRNA) and 24 different proteins. The 50S large subunit contains 3 rRNA molecules (23S, 5S and 4.5S rRNA) and 33 different proteins.

It localises to the plastid. The protein resides in the chloroplast. Functionally, component of the chloroplast ribosome (chloro-ribosome), a dedicated translation machinery responsible for the synthesis of chloroplast genome-encoded proteins, including proteins of the transcription and translation machinery and components of the photosynthetic apparatus. The protein is Large ribosomal subunit protein bL19c (RPL19) of Spinacia oleracea (Spinach).